A 2326-amino-acid chain; its full sequence is Nonribosomal peptide synthetase inpB (2326 aa).

The Carrier 1 domain occupies Ser8 to Ala84. Ser45 is subject to O-(pantetheine 4'-phosphoryl)serine. Residues Ala87–Ala121 are disordered. The span at Gly108 to Ala121 shows a compositional bias: polar residues. A condensation 1 region spans residues Gln144–Leu568. Residues Leu593–Arg997 form an adenylation 1 region. The 77-residue stretch at Glu1145–Val1221 folds into the Carrier 2 domain. At Ser1182 the chain carries O-(pantetheine 4'-phosphoryl)serine. The tract at residues Asp1226 to Glu1247 is disordered. The condensation 2 stretch occupies residues Glu1266–Leu1680. The segment at Glu1702–Arg2097 is adenylation 2. The Carrier 3 domain occupies Pro2216–Pro2294. At Ser2253 the chain carries O-(pantetheine 4'-phosphoryl)serine.

The protein belongs to the NRP synthetase family.

The protein operates within secondary metabolite biosynthesis. In terms of biological role, nonribosomal peptide synthetase; part of the inp gene cluster that mediates the biosynthesis of fellutamide B, a mycotoxin that acts as a proteasome inhibitor. In the first step of fellutabmide B biosynthesis inpC activates 3-hydroxydodecanoic acid to generate 3-hydroxydodecanoyl-AMP that is then loaded onto the T0 domain of inpB. The 3-hydroxydodecanoyl-S-phosphopantetheinyl-T0 is sequentially extended with L-Asn and L-Gln by the two CAT modules of inpB. The linear lipodipeptide from inpB is then transferred onto inpA for the addition of the third amino acid, L-Leu. Reductive releasing of the lipotripeptide by the TE domain of inpA produces (2S)-fellutamide B. InpF might be involved in the release and transfer of the lipodipeptide from inpB to inpA. The inp cluster-encoded proteasome subunit inpE confers resistance to internally produced fellutamides. The MFS efflux transporter inpD may contribute to fellutamide resistance as well. In Emericella nidulans (strain FGSC A4 / ATCC 38163 / CBS 112.46 / NRRL 194 / M139) (Aspergillus nidulans), this protein is Nonribosomal peptide synthetase inpB.